The primary structure comprises 282 residues: MENGFLLINKEQGKTSFETLFPIKKYFNTNRVGHAGTLDKFASGILVCLVGKYTKLSGYFTSLDKEYVAEFRFGLETDTLDPNGRIVSKTDYIPNVEDIDLKLKDFVGEIYQSPPRFSSVHIDGSRAYKLALNGKFFEIKKRKVTVYNIQRLSYDFSSSLLSLKISCSKGTYIRSIARDLAYSLNSCAYVSNLKRTKVGMFRLKDSTLCENLSKASLISLESLKSFEKVYIDSNKINLVKNGVYFEIEININEFKILKSREEKILAVIQGVGLNKYKYVIIF.

The Nucleophile role is filled by D39.

It belongs to the pseudouridine synthase TruB family. Type 1 subfamily.

It carries out the reaction uridine(55) in tRNA = pseudouridine(55) in tRNA. Its function is as follows. Responsible for synthesis of pseudouridine from uracil-55 in the psi GC loop of transfer RNAs. The polypeptide is tRNA pseudouridine synthase B (Borreliella burgdorferi (strain ATCC 35210 / DSM 4680 / CIP 102532 / B31) (Borrelia burgdorferi)).